A 725-amino-acid chain; its full sequence is 1,4-alpha-glucan branching enzyme GlgB (725 aa).

Asp403 (nucleophile) is an active-site residue. The active-site Proton donor is the Glu456.

Belongs to the glycosyl hydrolase 13 family. GlgB subfamily. Monomer.

The enzyme catalyses Transfers a segment of a (1-&gt;4)-alpha-D-glucan chain to a primary hydroxy group in a similar glucan chain.. It participates in glycan biosynthesis; glycogen biosynthesis. Functionally, catalyzes the formation of the alpha-1,6-glucosidic linkages in glycogen by scission of a 1,4-alpha-linked oligosaccharide from growing alpha-1,4-glucan chains and the subsequent attachment of the oligosaccharide to the alpha-1,6 position. The chain is 1,4-alpha-glucan branching enzyme GlgB from Pectobacterium atrosepticum (strain SCRI 1043 / ATCC BAA-672) (Erwinia carotovora subsp. atroseptica).